Here is a 198-residue protein sequence, read N- to C-terminus: Nucleoid occlusion factor SlmA (198 aa).

Residues 9–70 enclose the HTH tetR-type domain; it reads RNRREEILQA…SLIEFIEDSL (62 aa). The H-T-H motif DNA-binding region spans 33 to 52; sequence TTAKLAANVGVSEAALYRHF. Residues 119–144 adopt a coiled-coil conformation; it reads DRLQGRINQLYERIEVQLRQVLRERK.

It belongs to the nucleoid occlusion factor SlmA family. Homodimer. Interacts with FtsZ.

The protein resides in the cytoplasm. Its subcellular location is the nucleoid. In terms of biological role, required for nucleoid occlusion (NO) phenomenon, which prevents Z-ring formation and cell division over the nucleoid. Acts as a DNA-associated cell division inhibitor that binds simultaneously chromosomal DNA and FtsZ, and disrupts the assembly of FtsZ polymers. SlmA-DNA-binding sequences (SBS) are dispersed on non-Ter regions of the chromosome, preventing FtsZ polymerization at these regions. This chain is Nucleoid occlusion factor SlmA, found in Sodalis glossinidius (strain morsitans).